The primary structure comprises 323 residues: Ribose 1,5-bisphosphate isomerase (323 aa).

Substrate is bound by residues 22–25 and arginine 65; that span reads RGAA. Cysteine 130 (proton acceptor) is an active-site residue. Aspartate 199 (proton donor) is an active-site residue. Residues 209-210 and lysine 235 contribute to the substrate site; that span reads NK. A Glycyl lysine isopeptide (Lys-Gly) (interchain with G-Cter in SAMP2) cross-link involves residue lysine 210.

Belongs to the eIF-2B alpha/beta/delta subunits family. R15P isomerase subfamily.

The catalysed reaction is alpha-D-ribose 1,5-bisphosphate = D-ribulose 1,5-bisphosphate. Its function is as follows. Catalyzes the isomerization of ribose 1,5-bisphosphate (R15P) to ribulose 1,5-bisphosphate (RuBP), the CO(2) acceptor and substrate for RubisCO. Functions in an archaeal AMP degradation pathway, together with AMP phosphorylase and RubisCO. The chain is Ribose 1,5-bisphosphate isomerase from Haloferax volcanii (strain ATCC 29605 / DSM 3757 / JCM 8879 / NBRC 14742 / NCIMB 2012 / VKM B-1768 / DS2) (Halobacterium volcanii).